We begin with the raw amino-acid sequence, 537 residues long: Chaperonin GroEL 2 (537 aa).

ATP contacts are provided by residues 29-32 (TLGP), 86-90 (DGTTT), G413, 477-479 (NAA), and D493.

It belongs to the chaperonin (HSP60) family. Forms a cylinder of 14 subunits composed of two heptameric rings stacked back-to-back. Interacts with the co-chaperonin GroES.

The protein localises to the cytoplasm. The enzyme catalyses ATP + H2O + a folded polypeptide = ADP + phosphate + an unfolded polypeptide.. Together with its co-chaperonin GroES, plays an essential role in assisting protein folding. The GroEL-GroES system forms a nano-cage that allows encapsulation of the non-native substrate proteins and provides a physical environment optimized to promote and accelerate protein folding. The protein is Chaperonin GroEL 2 of Rhodococcus jostii (strain RHA1).